The chain runs to 387 residues: Probable protein phosphatase 2C 25 (387 aa).

Residues 52–351 enclose the PPM-type phosphatase domain; sequence EFSFAVVQAN…DDITVVVVYI (300 aa). Mn(2+) is bound by residues aspartate 83, glycine 84, aspartate 283, and aspartate 342.

It belongs to the PP2C family. It depends on Mg(2+) as a cofactor. Requires Mn(2+) as cofactor.

It catalyses the reaction O-phospho-L-seryl-[protein] + H2O = L-seryl-[protein] + phosphate. The catalysed reaction is O-phospho-L-threonyl-[protein] + H2O = L-threonyl-[protein] + phosphate. This is Probable protein phosphatase 2C 25 from Oryza sativa subsp. japonica (Rice).